The sequence spans 450 residues: Glutathione reductase (450 aa).

FAD-binding residues include serine 14, glycine 15, glutamate 34, threonine 41, cysteine 42, lysine 50, and alanine 115. Glutathione is bound at residue serine 14. A disulfide bridge connects residues cysteine 42 and cysteine 47. The NADP(+) site is built by alanine 175, isoleucine 178, glutamate 181, arginine 198, arginine 204, and glycine 262. Aspartate 303 lines the FAD pocket. Aspartate 309 is a binding site for NADP(+). Threonine 311 lines the FAD pocket. Arginine 319 is a binding site for glutathione. Valine 342 serves as a coordination point for NADP(+). Residue histidine 439 participates in FAD binding. Residue histidine 439 is the Proton acceptor of the active site.

The protein belongs to the class-I pyridine nucleotide-disulfide oxidoreductase family. As to quaternary structure, homodimer. The cofactor is FAD.

The protein resides in the cytoplasm. It catalyses the reaction 2 glutathione + NADP(+) = glutathione disulfide + NADPH + H(+). Catalyzes the reduction of glutathione disulfide (GSSG) to reduced glutathione (GSH). Constitutes the major mechanism to maintain a high GSH:GSSG ratio in the cytosol. The sequence is that of Glutathione reductase (gor) from Streptococcus thermophilus.